A 340-amino-acid polypeptide reads, in one-letter code: Pseudaminic acid synthase (340 aa).

Positions 281–337 (SLFVIKDIQKGEALTENNIKALRPNLGLHPKFYKEILGQKASKFLKANTPLSADDIE) constitute an AFP-like domain.

It belongs to the pseudaminic acid synthase family. A divalent metal cation serves as cofactor.

The catalysed reaction is 2,4-diacetamido-2,4,6-trideoxy-beta-L-altrose + phosphoenolpyruvate + H2O = pseudaminate + phosphate. Functionally, catalyzes the fifth step in the biosynthesis of pseudaminic acid, a sialic-acid-like sugar that is used to modify flagellin. Catalyzes the condensation of phosphoenolpyruvate with 2,4-diacetamido-2,4,6-trideoxy-beta-l-altropyranose, forming pseudaminic acid. This Helicobacter pylori (strain ATCC 700392 / 26695) (Campylobacter pylori) protein is Pseudaminic acid synthase (pseI).